The primary structure comprises 154 residues: Cyanate hydratase (154 aa).

Catalysis depends on residues Arg-100, Glu-103, and Ser-126.

This sequence belongs to the cyanase family.

It carries out the reaction cyanate + hydrogencarbonate + 3 H(+) = NH4(+) + 2 CO2. Catalyzes the reaction of cyanate with bicarbonate to produce ammonia and carbon dioxide. This Aspergillus fumigatus (strain ATCC MYA-4609 / CBS 101355 / FGSC A1100 / Af293) (Neosartorya fumigata) protein is Cyanate hydratase.